We begin with the raw amino-acid sequence, 372 residues long: Queuine tRNA-ribosyltransferase (372 aa).

Residue Asp89 is the Proton acceptor of the active site. Substrate contacts are provided by residues 89 to 93 (DSGGF), Asp161, and Gly232. The tract at residues 262–268 (GIGDLPS) is RNA binding. Asp281 acts as the Nucleophile in catalysis. The segment at 286-290 (TKAAR) is RNA binding; important for wobble base 34 recognition. Zn(2+) contacts are provided by Cys319, Cys321, Cys324, and His351.

The protein belongs to the queuine tRNA-ribosyltransferase family. Homodimer. Within each dimer, one monomer is responsible for RNA recognition and catalysis, while the other monomer binds to the replacement base PreQ1. Zn(2+) serves as cofactor.

It carries out the reaction 7-aminomethyl-7-carbaguanine + guanosine(34) in tRNA = 7-aminomethyl-7-carbaguanosine(34) in tRNA + guanine. Its pathway is tRNA modification; tRNA-queuosine biosynthesis. Functionally, catalyzes the base-exchange of a guanine (G) residue with the queuine precursor 7-aminomethyl-7-deazaguanine (PreQ1) at position 34 (anticodon wobble position) in tRNAs with GU(N) anticodons (tRNA-Asp, -Asn, -His and -Tyr). Catalysis occurs through a double-displacement mechanism. The nucleophile active site attacks the C1' of nucleotide 34 to detach the guanine base from the RNA, forming a covalent enzyme-RNA intermediate. The proton acceptor active site deprotonates the incoming PreQ1, allowing a nucleophilic attack on the C1' of the ribose to form the product. After dissociation, two additional enzymatic reactions on the tRNA convert PreQ1 to queuine (Q), resulting in the hypermodified nucleoside queuosine (7-(((4,5-cis-dihydroxy-2-cyclopenten-1-yl)amino)methyl)-7-deazaguanosine). This chain is Queuine tRNA-ribosyltransferase, found in Chlamydia trachomatis serovar L2 (strain ATCC VR-902B / DSM 19102 / 434/Bu).